An 889-amino-acid polypeptide reads, in one-letter code: Low-affinity potassium transport protein (889 aa).

The Cytoplasmic segment spans residues 1 to 51 (MPTAKRTSSRASLALPFQLRLVHKKSWGHRLRDFISGFLKSCRPIAKYVFP). Residues 52–73 (NFIVVHYIYLITLSIIGSILLY) form a helical membrane-spanning segment. The Extracellular segment spans residues 74-80 (PCKNTAF). The chain crosses the membrane as a helical span at residues 81–101 (IDVLFLAAGASTQGGLATKST). At 102–109 (NDFNLYQQ) the chain is on the cytoplasmic side. The helical transmembrane segment at 110-130 (IVVYVITLLSTPILIHGFLAF) threads the bilayer. Over 131 to 464 (VRLYWFERYF…EYRALRLLCC (334 aa)) the chain is Extracellular. Residues 189-244 (REDPRQSASDVPMDSPDTSALSSISPLNVSSSKEESSDTQSSPPNFSSKRQPSDVD) form a disordered region. Residues 207-219 (SALSSISPLNVSS) are compositionally biased toward low complexity. N-linked (GlcNAc...) asparagine glycans are attached at residues Asn-216, Asn-233, and Asn-265. A helical transmembrane segment spans residues 465–487 (ILMVYYIGFNILAFVTIVPWACT). Topologically, residues 488-499 (RHHYSEIIRRNG) are cytoplasmic. Residues 500–521 (VSPTWWGFFTAMSAFSNLGLSL) traverse the membrane as a helical segment. The Extracellular segment spans residues 522 to 524 (TAD). Residues 525 to 545 (SMVSFDTAPYPLIFMMFFIII) traverse the membrane as a helical segment. Residues 546-548 (GNT) lie on the Cytoplasmic side of the membrane. A helical membrane pass occupies residues 549-569 (GFPIMLRFIIWIMFKTSRDLS). Topologically, residues 570–584 (QFKESLGFLLDHPRR) are extracellular. Residues 585–605 (CFTLLFPSGPTWWLFTTLVVL) traverse the membrane as a helical segment. Over 606–609 (NATD) the chain is Cytoplasmic. Residues 610-630 (WILFIILDFNSAVVRQVAKGY) traverse the membrane as a helical segment. Over 631 to 657 (RALMGLFQSVCTRTAGFNVVDLSKLHP) the chain is Extracellular. The helical transmembrane segment at 658–678 (SIQVSYMLMMYVSVLPLAISI) threads the bilayer. The Cytoplasmic segment spans residues 679–743 (RRTNVYEEQS…KSFVGAHLRR (65 aa)). A disordered region spans residues 705–733 (DDIKETDHDGESEERDTVSTKSKPKKQSP). Residues 744–764 (QLSFDLWYLFLGLFIICICEG) form a helical membrane-spanning segment. At 765–776 (RKIEDVNKPDFN) the chain is on the extracellular side. Residues 777–797 (VFAILFEVVSAYGTVGLSLGY) form a helical membrane-spanning segment. Residues 798-889 (PNTNTSLSAQ…KIATKFWGKH (92 aa)) are Cytoplasmic-facing.

This sequence belongs to the TrkH potassium transport family.

It localises to the membrane. Its function is as follows. This protein is required for low-affinity potassium transport. The polypeptide is Low-affinity potassium transport protein (TRK2) (Saccharomyces cerevisiae (strain ATCC 204508 / S288c) (Baker's yeast)).